The following is a 682-amino-acid chain: Glutamine--fructose-6-phosphate aminotransferase [isomerizing] 2 (682 aa).

The active-site For GATase activity is Cys2. The Glutamine amidotransferase type-2 domain occupies 2–288 (CGIFAYMNYR…DDDIAAVADG (287 aa)). Phosphoserine is present on Ser244. SIS domains follow at residues 360 to 499 (HLKE…DRIS) and 531 to 672 (LALE…VDFP). Substrate-binding positions include 377-378 (TS), 422-424 (SQS), Thr427, and His578.

In terms of tissue distribution, highest levels of expression in heart, placenta, and spinal cord.

It carries out the reaction D-fructose 6-phosphate + L-glutamine = D-glucosamine 6-phosphate + L-glutamate. It functions in the pathway nucleotide-sugar biosynthesis; UDP-N-acetyl-alpha-D-glucosamine biosynthesis; alpha-D-glucosamine 6-phosphate from D-fructose 6-phosphate: step 1/1. Controls the flux of glucose into the hexosamine pathway. Most likely involved in regulating the availability of precursors for N- and O-linked glycosylation of proteins. This Homo sapiens (Human) protein is Glutamine--fructose-6-phosphate aminotransferase [isomerizing] 2 (GFPT2).